A 670-amino-acid polypeptide reads, in one-letter code: Glycine--tRNA ligase beta subunit (670 aa).

The protein belongs to the class-II aminoacyl-tRNA synthetase family. As to quaternary structure, tetramer of two alpha and two beta subunits.

Its subcellular location is the cytoplasm. The catalysed reaction is tRNA(Gly) + glycine + ATP = glycyl-tRNA(Gly) + AMP + diphosphate. The sequence is that of Glycine--tRNA ligase beta subunit from Thermotoga neapolitana (strain ATCC 49049 / DSM 4359 / NBRC 107923 / NS-E).